A 155-amino-acid polypeptide reads, in one-letter code: Putative pre-16S rRNA nuclease (155 aa).

The protein belongs to the YqgF nuclease family.

The protein localises to the cytoplasm. Could be a nuclease involved in processing of the 5'-end of pre-16S rRNA. This chain is Putative pre-16S rRNA nuclease, found in Xanthomonas axonopodis pv. citri (strain 306).